The sequence spans 481 residues: Argininosuccinate lyase (481 aa).

The protein belongs to the lyase 1 family. Argininosuccinate lyase subfamily.

It is found in the cytoplasm. The enzyme catalyses 2-(N(omega)-L-arginino)succinate = fumarate + L-arginine. The protein operates within amino-acid biosynthesis; L-arginine biosynthesis; L-arginine from L-ornithine and carbamoyl phosphate: step 3/3. The chain is Argininosuccinate lyase from Methanococcus maripaludis (strain C7 / ATCC BAA-1331).